The following is a 183-amino-acid chain: Small ribosomal subunit protein uS4c (183 aa).

An S4 RNA-binding domain is found at 82–143 (MRLDNILFRL…KQRSKALIQN (62 aa)).

It belongs to the universal ribosomal protein uS4 family. In terms of assembly, part of the 30S ribosomal subunit. Contacts protein S5. The interaction surface between S4 and S5 is involved in control of translational fidelity.

The protein resides in the plastid. It is found in the chloroplast. Its function is as follows. One of the primary rRNA binding proteins, it binds directly to 16S rRNA where it nucleates assembly of the body of the 30S subunit. In terms of biological role, with S5 and S12 plays an important role in translational accuracy. The chain is Small ribosomal subunit protein uS4c (rps4) from Freesia sp. (strain Lejeune 1997).